Consider the following 472-residue polypeptide: Methylenetetrahydrofolate--tRNA-(uracil-5-)-methyltransferase TrmFO (472 aa).

15-20 (GGGLAG) contacts FAD.

This sequence belongs to the MnmG family. TrmFO subfamily. Requires FAD as cofactor.

It localises to the cytoplasm. The enzyme catalyses uridine(54) in tRNA + (6R)-5,10-methylene-5,6,7,8-tetrahydrofolate + NADH + H(+) = 5-methyluridine(54) in tRNA + (6S)-5,6,7,8-tetrahydrofolate + NAD(+). The catalysed reaction is uridine(54) in tRNA + (6R)-5,10-methylene-5,6,7,8-tetrahydrofolate + NADPH + H(+) = 5-methyluridine(54) in tRNA + (6S)-5,6,7,8-tetrahydrofolate + NADP(+). In terms of biological role, catalyzes the folate-dependent formation of 5-methyl-uridine at position 54 (M-5-U54) in all tRNAs. The sequence is that of Methylenetetrahydrofolate--tRNA-(uracil-5-)-methyltransferase TrmFO from Rhizobium meliloti (strain 1021) (Ensifer meliloti).